We begin with the raw amino-acid sequence, 327 residues long: MAGRSRRRSFWSVGVAAALLCLLAAHGCSAKHHKPKPTPGGISGNASSSSSNSSTPSIPPPVAPTPTAPTPPIPSPGTGSSNGSSGGGGGGWLNARATWYGAPNGAGPDDNGGACGFKNVNLPPFSAMTSCGNEPLFKDGKGCGSCYQIRCVGHPACSGLPETVIITDMNYYPVSLYHFDLSGTAFGAMAKDNRNDELRHAGIIDIQFRRVPCQYPGLTVTFHVEQGSNPVYMAILVEYENGDGDVVQVDLMESRYSTGGVDGTPTGVWTPMRESWGSIWRLDTNHPLQGPFSLRITNESGKTLIADQVIPADWQPNTVYSSIVQFD.

The signal sequence occupies residues 1–30 (MAGRSRRRSFWSVGVAAALLCLLAAHGCSA). The tract at residues 30 to 88 (AKHHKPKPTPGGISGNASSSSSNSSTPSIPPPVAPTPTAPTPPIPSPGTGSSNGSSGGG) is disordered. Residues 44–56 (GNASSSSSNSSTP) show a composition bias toward low complexity. 2 N-linked (GlcNAc...) asparagine glycosylation sites follow: N45 and N52. The span at 57-75 (SIPPPVAPTPTAPTPPIPS) shows a compositional bias: pro residues. N-linked (GlcNAc...) asparagine glycosylation is present at N82. The Expansin-like EG45 domain occupies 112–218 (GGACGFKNVN…RRVPCQYPGL (107 aa)). 3 disulfide bridges follow: C115–C143, C146–C213, and C151–C157. Positions 231 to 322 (VYMAILVEYE…DWQPNTVYSS (92 aa)) constitute an Expansin-like CBD domain. N-linked (GlcNAc...) asparagine glycosylation occurs at N298.

The protein belongs to the expansin family. Expansin B subfamily.

The protein localises to the secreted. It is found in the cell wall. The protein resides in the membrane. Functionally, may cause loosening and extension of plant cell walls by disrupting non-covalent bonding between cellulose microfibrils and matrix glucans. No enzymatic activity has been found. May be required for rapid internodal elongation in deepwater rice during submergence. The chain is Expansin-B7 (EXPB7) from Oryza sativa subsp. japonica (Rice).